The chain runs to 462 residues: Chitinase 1 (462 aa).

The first 17 residues, M1 to A17, serve as a signal peptide directing secretion. The GH18 domain occupies S18–S291. N57 carries an N-linked (GlcNAc...) asparagine glycan. The active-site Proton donor is E147.

The protein belongs to the glycosyl hydrolase 18 family. Chitinase class V subfamily.

It localises to the secreted. It carries out the reaction Random endo-hydrolysis of N-acetyl-beta-D-glucosaminide (1-&gt;4)-beta-linkages in chitin and chitodextrins.. Functionally, chitinase involved in the remodeling of chitin in the fungal cell wall. Plays a role in cell separation. In Candida albicans (strain SC5314 / ATCC MYA-2876) (Yeast), this protein is Chitinase 1 (CHT1).